The following is a 413-amino-acid chain: SWIRM domain-containing protein FUN19 (413 aa).

Over residues 35-51 (KASNNNNDSNKNGLNMS) the composition is skewed to low complexity. 3 disordered regions span residues 35–55 (KASN…DYSN), 189–211 (YNDD…PLAS), and 249–271 (YSPQ…PSAS). A Phosphothreonine modification is found at threonine 194. The segment covering 200–211 (SSSSRLPSPLAS) has biased composition (low complexity). Residues serine 207 and serine 211 each carry the phosphoserine modification. An SWIRM domain is found at 316-413 (LKIEWKGSPM…LQDSNFTKYL (98 aa)).

The chain is SWIRM domain-containing protein FUN19 (FUN19) from Saccharomyces cerevisiae (strain ATCC 204508 / S288c) (Baker's yeast).